The sequence spans 200 residues: Nucleoside triphosphate pyrophosphatase (200 aa).

Residue aspartate 79 is the Proton acceptor of the active site.

Belongs to the Maf family. A divalent metal cation serves as cofactor.

The protein resides in the cytoplasm. The enzyme catalyses a ribonucleoside 5'-triphosphate + H2O = a ribonucleoside 5'-phosphate + diphosphate + H(+). It catalyses the reaction a 2'-deoxyribonucleoside 5'-triphosphate + H2O = a 2'-deoxyribonucleoside 5'-phosphate + diphosphate + H(+). In terms of biological role, nucleoside triphosphate pyrophosphatase. May have a dual role in cell division arrest and in preventing the incorporation of modified nucleotides into cellular nucleic acids. The chain is Nucleoside triphosphate pyrophosphatase from Legionella pneumophila (strain Lens).